The following is a 535-amino-acid chain: Ribonuclease Y (535 aa).

The chain crosses the membrane as a helical span at residues 4–24; sequence IILLIVSALIGLILGYALISI. The interval 118 to 141 is disordered; sequence ENLSSKEKVLDSKEQSLTDKSKHI. Positions 225 to 285 constitute a KH domain; sequence TITSVHLPDD…IRREIARMTL (61 aa). In terms of domain architecture, HD spans 351–444; that stretch reads VLRHSVEVGK…VAAADALSSA (94 aa).

The protein belongs to the RNase Y family.

The protein localises to the cell membrane. Endoribonuclease that initiates mRNA decay. In Streptococcus pyogenes serotype M1, this protein is Ribonuclease Y.